The primary structure comprises 304 residues: UDP-3-O-acyl-N-acetylglucosamine deacetylase (304 aa).

Positions 78, 237, and 241 each coordinate Zn(2+). H264 acts as the Proton donor in catalysis.

This sequence belongs to the LpxC family. It depends on Zn(2+) as a cofactor.

The catalysed reaction is a UDP-3-O-[(3R)-3-hydroxyacyl]-N-acetyl-alpha-D-glucosamine + H2O = a UDP-3-O-[(3R)-3-hydroxyacyl]-alpha-D-glucosamine + acetate. It participates in glycolipid biosynthesis; lipid IV(A) biosynthesis; lipid IV(A) from (3R)-3-hydroxytetradecanoyl-[acyl-carrier-protein] and UDP-N-acetyl-alpha-D-glucosamine: step 2/6. Its function is as follows. Catalyzes the hydrolysis of UDP-3-O-myristoyl-N-acetylglucosamine to form UDP-3-O-myristoylglucosamine and acetate, the committed step in lipid A biosynthesis. The sequence is that of UDP-3-O-acyl-N-acetylglucosamine deacetylase from Polynucleobacter asymbioticus (strain DSM 18221 / CIP 109841 / QLW-P1DMWA-1) (Polynucleobacter necessarius subsp. asymbioticus).